Consider the following 60-residue polypeptide: Putative SERF-like protein (60 aa).

Residues 1-53 (MTRGNQRDLARQKNQKKQADLTKGKRTDNLTVEQRKARDAELMREKQKKKEEA) show a composition bias toward basic and acidic residues. A disordered region spans residues 1-60 (MTRGNQRDLARQKNQKKQADLTKGKRTDNLTVEQRKARDAELMREKQKKKEEAAAAGTSK).

It belongs to the SERF family.

This Drosophila melanogaster (Fruit fly) protein is Putative SERF-like protein.